The following is a 60-amino-acid chain: Large ribosomal subunit protein bL32 (60 aa).

Residues 1 to 23 (MAVPKRKKSKSRRNMHRSHHAIK) form a disordered region.

The protein belongs to the bacterial ribosomal protein bL32 family.

The chain is Large ribosomal subunit protein bL32 from Wolbachia pipientis subsp. Culex pipiens (strain wPip).